The following is a 251-amino-acid chain: uncharacterized protein (251 aa).

This is an uncharacterized protein from Bacillus subtilis (strain 168).